A 466-amino-acid polypeptide reads, in one-letter code: Acetylcholine-gated chloride channel subunit acc-1 (466 aa).

The first 24 residues, 1 to 24 (MSHPGWIMVSFLTELLSQSSKGIA), serve as a signal peptide directing secretion. Over 25 to 242 (QSLDNCANDT…FVFERRYGWY (218 aa)) the chain is Extracellular. N32, N102, and N143 each carry an N-linked (GlcNAc...) asparagine glycan. A disulfide bridge links C158 with C172. Residue N211 is glycosylated (N-linked (GlcNAc...) asparagine). Residues 243–263 (VLQGYIPTMVTIVISWISFYL) form a helical membrane-spanning segment. The Cytoplasmic segment spans residues 264–272 (GPRAIPART). The chain crosses the membrane as a helical span at residues 273-290 (MLGVNSLLAMTFQFGNII). The Extracellular portion of the chain corresponds to 291–304 (RNLPRVSYVKAIDV). The chain crosses the membrane as a helical span at residues 305-325 (WMLSGMLFIFLSLLELAVVGF). Residues 326 to 427 (MSRNEGLPPK…MRELRPETVD (102 aa)) lie on the Cytoplasmic side of the membrane. The disordered stretch occupies residues 333–352 (PPKVKKRKRQEDDDEGFSWK). The helical transmembrane segment at 428–448 (FYSAIFFPTAYMLFNISYWSF) threads the bilayer. At 449–466 (YLTSLSEYFDEDVNIDQP) the chain is on the extracellular side.

This sequence belongs to the ligand-gated ion channel (TC 1.A.9) family. Homopentamer (in vitro). Forms heteropentamers composed of acc-1 and acc-4 or acc-1 and acc-3. Both homopentamers and heteropentamers form functional ion channels. As to expression, expressed in a subset of cholinergic motor neurons including cholinergic motor neurons in the ventral cord, the retrovesicular ganglion and in head neurons such as the SMD, RMD motor neurons, the AVA and AVE command interneurons and the SAA neurons. Also expressed in a small number of glutamatergic neurons including the pharyngeal neurons MI and M3, the PLM neurons and a pair of neurons in the lateral ganglion.

It localises to the cell membrane. Its function is as follows. Acetylcholine-gated chloride channel subunit. Forms functional homopentameric (in vitro) and functional heteropentameric ion channels with acc-3 and acc-4 ion channel subunits. Currents in channels are triggered in response to acetylcholine, but not in response to GABA, glutamate, glycine, histamine or dopamine. This chain is Acetylcholine-gated chloride channel subunit acc-1, found in Caenorhabditis elegans.